The chain runs to 391 residues: MVQISDLPRDLTEEVLSRIPVTSMRAVRFTCKKWNTLSKDRSFTKKHLRGARAAAKKKQTKEFQVIMMIQFRVYLYSVNLLNPSIERIGKLISLDVEDHVDISKIFHCGGLLLCITKDISRLVVWNPYSGQTRWIKPRNSYHRLDRYALGYEEKNKSCRCYKILRFMDDYEDDRALRLIREFEIYDLNSDSWKVVNVTPDWDVEFYHRGLSLKGNTYWFAQEKLPPLPRGRVITISDMADFLLCFDFTRERFGPRLPLPFHSFVEDTVTLSSVRDKKLAVLFQPCSASTVKIWISRKIEPNAVSWRKVFLAVDMKSLTGFQFDINAASFFVDEKKKVAMVLDKDRFSYKFTRNIAYIIGKKGYFEKVDLGESTVSSCASLVCSYVPSSVQI.

An F-box domain is found at 1–47 (MVQISDLPRDLTEEVLSRIPVTSMRAVRFTCKKWNTLSKDRSFTKKH). Kelch repeat units follow at residues 104-154 (KIFH…YEEK) and 163-215 (ILRF…LKGN).

As to quaternary structure, part of a SCF (ASK-cullin-F-box) protein ligase complex. Interacts with ASK11.

It is found in the nucleus. The protein operates within protein modification; protein ubiquitination. Component of SCF(ASK-cullin-F-box) E3 ubiquitin ligase complexes, which may mediate the ubiquitination and subsequent proteasomal degradation of target proteins. The chain is F-box/kelch-repeat protein At3g16740 from Arabidopsis thaliana (Mouse-ear cress).